The chain runs to 190 residues: CASP-like protein 2U2 (190 aa).

The Cytoplasmic portion of the chain corresponds to 1-10; the sequence is MGEKMQGFQG. A helical transmembrane segment spans residues 11-31; sequence WSIGIRFLTSCVSIASLILLL. Residues 32 to 59 are Extracellular-facing; the sequence is KSKQTVQVSVGLDYVTQQVKYSDTSAFV. Residues 60–80 form a helical membrane-spanning segment; that stretch reads YLVFSDILVAVYCIVVLVGLI. Residues 81–94 are Cytoplasmic-facing; sequence PAALGKSHPGKAGQ. The helical transmembrane segment at 95-115 threads the bilayer; that stretch reads WAIFIFDQVLAYVLLAAASSA. Residues 116–144 lie on the Extracellular side of the membrane; it reads TEVAYLADKGMAKTSWEAVCPRFAHFCHT. The helical transmembrane segment at 145-165 threads the bilayer; the sequence is VMASISLSFVAVLLLALLAVV. Residues 166-190 lie on the Cytoplasmic side of the membrane; the sequence is SASGLFGRFYRRPLFAVKMRHNTLI.

Belongs to the Casparian strip membrane proteins (CASP) family. As to quaternary structure, homodimer and heterodimers.

The protein resides in the cell membrane. In Pteridium aquilinum subsp. aquilinum (Bracken fern), this protein is CASP-like protein 2U2.